A 317-amino-acid polypeptide reads, in one-letter code: Transaldolase (317 aa).

K132 (schiff-base intermediate with substrate) is an active-site residue.

Belongs to the transaldolase family. Type 1 subfamily. As to quaternary structure, homodimer.

The protein resides in the cytoplasm. It catalyses the reaction D-sedoheptulose 7-phosphate + D-glyceraldehyde 3-phosphate = D-erythrose 4-phosphate + beta-D-fructose 6-phosphate. Its pathway is carbohydrate degradation; pentose phosphate pathway; D-glyceraldehyde 3-phosphate and beta-D-fructose 6-phosphate from D-ribose 5-phosphate and D-xylulose 5-phosphate (non-oxidative stage): step 2/3. Functionally, transaldolase is important for the balance of metabolites in the pentose-phosphate pathway. This Shewanella denitrificans (strain OS217 / ATCC BAA-1090 / DSM 15013) protein is Transaldolase.